Reading from the N-terminus, the 483-residue chain is Regulatory protein ViaA (483 aa).

Belongs to the ViaA family. As to quaternary structure, homodimer. Interacts with RavA.

The protein resides in the cytoplasm. Component of the RavA-ViaA chaperone complex, which may act on the membrane to optimize the function of some of the respiratory chains. ViaA stimulates the ATPase activity of RavA. The sequence is that of Regulatory protein ViaA from Escherichia coli O81 (strain ED1a).